The sequence spans 78 residues: Glycophorin-E (78 aa).

The signal sequence occupies residues 1-19 (MYGKIIFVLLLSGIVSISA). Residues 20–52 (SSTTGVAMHTSTSSSVTKSYISSQTNGITLINW) are Extracellular-facing. The chain crosses the membrane as a helical span at residues 53 to 73 (WAMARVIFEVMLVVVGMIILI). Topologically, residues 74–78 (SYCIR) are cytoplasmic.

Belongs to the glycophorin-A family. The N-terminal extracellular domain is heavily glycosylated on serine and threonine residues. In terms of tissue distribution, erythrocytes.

It localises to the membrane. Its function is as follows. This protein is a minor sialoglycoprotein in human erythrocyte membranes. The polypeptide is Glycophorin-E (GYPE) (Homo sapiens (Human)).